The chain runs to 201 residues: dCTP deaminase, dUMP-forming (201 aa).

DCTP-binding positions include 117 to 122 (RSSFGR), Asp135, 143 to 145 (TLE), Gln163, Tyr177, and Gln188. Glu145 functions as the Proton donor/acceptor in the catalytic mechanism.

This sequence belongs to the dCTP deaminase family. Homotrimer.

It carries out the reaction dCTP + 2 H2O = dUMP + NH4(+) + diphosphate. The protein operates within pyrimidine metabolism; dUMP biosynthesis; dUMP from dCTP: step 1/1. Its function is as follows. Bifunctional enzyme that catalyzes both the deamination of dCTP to dUTP and the hydrolysis of dUTP to dUMP without releasing the toxic dUTP intermediate. This is dCTP deaminase, dUMP-forming from Methanococcus aeolicus (strain ATCC BAA-1280 / DSM 17508 / OCM 812 / Nankai-3).